The chain runs to 287 residues: Phospholipase A and acyltransferase 5 (287 aa).

Disordered stretches follow at residues 48-72 and 86-138; these read PKQISRTASTESSDTQPTNDSASSQ and DRGL…SNQK. 2 stretches are compositionally biased toward polar residues: residues 49-72 and 128-138; these read KQISRTASTESSDTQPTNDSASSQ and LKNQAAESNQK. Positions 144 to 257 constitute an LRAT domain; the sequence is LIEIFRIGYE…LRYGVPRSQQ (114 aa). Catalysis depends on residues H154 and H166. C241 serves as the catalytic Acyl-thioester intermediate.

The protein belongs to the H-rev107 family. As to expression, expressed in testis.

It is found in the cytoplasm. It localises to the cytosol. The enzyme catalyses a 1,2-diacyl-sn-glycero-3-phosphocholine + H2O = a 1-acyl-sn-glycero-3-phosphocholine + a fatty acid + H(+). It carries out the reaction a 1,2-diacyl-sn-glycero-3-phosphocholine + H2O = a 2-acyl-sn-glycero-3-phosphocholine + a fatty acid + H(+). The catalysed reaction is 1-hexadecanoyl-2-(5Z,8Z,11Z,14Z-eicosatetraenoyl)-sn-glycero-3-phosphocholine + 1,2-di-(9Z-octadecenoyl)-sn-glycero-3-phosphoethanolamine = N-(5Z,8Z,11Z,14Z-eicosatetraenoyl)-1,2-di-(9Z-octadecenoyl)-sn-glycero-3-phosphoethanolamine + 1-hexadecanoyl-sn-glycero-3-phosphocholine + H(+). It catalyses the reaction 1,2-di-(9Z-octadecenoyl)-sn-glycero-3-phosphoethanolamine + 1,2-dihexadecanoyl-sn-glycero-3-phosphocholine = N-hexadecanoyl-1,2-di-(9Z-octadecenoyl)-sn-glycero-3-phosphoethanolamine + 1-hexadecanoyl-sn-glycero-3-phosphocholine + H(+). The enzyme catalyses 1,2-di-(9Z-octadecenoyl)-sn-glycero-3-phosphoethanolamine + 1,2-dihexadecanoyl-sn-glycero-3-phosphocholine = N-hexadecanoyl-1,2-di-(9Z-octadecenoyl)-sn-glycero-3-phosphoethanolamine + 2-hexadecanoyl-sn-glycero-3-phosphocholine + H(+). It carries out the reaction a 1,2-diacyl-sn-glycero-3-phosphoethanolamine + a 1,2-diacyl-sn-glycero-3-phosphocholine = an N-acyl-1,2-diacyl-sn-glycero-3-phosphoethanolamine + a 1-acyl-sn-glycero-3-phosphocholine + H(+). The catalysed reaction is a 1,2-diacyl-sn-glycero-3-phosphoethanolamine + a 1,2-diacyl-sn-glycero-3-phosphocholine = an N-acyl-1,2-diacyl-sn-glycero-3-phosphoethanolamine + a 2-acyl-sn-glycero-3-phosphocholine + H(+). It catalyses the reaction 1-hexadecanoyl-2-(9Z-octadecenoyl)-sn-glycero-3-phosphocholine + 1,2-di-(9Z-octadecenoyl)-sn-glycero-3-phosphoethanolamine = N,1,2-tri-(9Z-octadecenoyl)-sn-glycero-3-phosphoethanolamine + 1-hexadecanoyl-sn-glycero-3-phosphocholine + H(+). Its function is as follows. Exhibits both phospholipase A1/2 and acyltransferase activities. Shows phospholipase A1 (PLA1) and A2 (PLA2) activity, catalyzing the calcium-independent release of fatty acids from the sn-1 or sn-2 position of glycerophospholipids. Shows N-acyltransferase activity, catalyzing the calcium-independent transfer of a fatty acyl group at the sn-1 position of phosphatidylcholine (PC) and other glycerophospholipids to the primary amine of phosphatidylethanolamine (PE), forming N-acylphosphatidylethanolamine (NAPE), which serves as precursor for N-acylethanolamines (NAEs). In Rattus norvegicus (Rat), this protein is Phospholipase A and acyltransferase 5.